The following is a 215-amino-acid chain: Recombination protein RecR (215 aa).

A C4-type zinc finger spans residues 74-89 (CQRCGHLSADPICDIC). The Toprim domain maps to 97–191 (GVICVVADSR…RVTRIAYGLP (95 aa)).

The protein belongs to the RecR family.

May play a role in DNA repair. It seems to be involved in an RecBC-independent recombinational process of DNA repair. It may act with RecF and RecO. This Synechococcus sp. (strain RCC307) protein is Recombination protein RecR.